The chain runs to 124 residues: Alpha-endosulfine (124 aa).

A Phosphoserine; by GWL modification is found at S74. The segment at 99 to 124 is disordered; that stretch reads VTGDHIPTPQDLPQRKNTILTSKLAG. Polar residues predominate over residues 113–124; that stretch reads RKNTILTSKLAG.

It belongs to the endosulfine family. In terms of processing, phosphorylation at Ser-74 by gwl during mitosis is essential for interaction with ppp2r2d (PR55-delta) and subsequent inactivation of PP2A.

The protein resides in the cytoplasm. Its function is as follows. Protein phosphatase inhibitor that specifically inhibits protein phosphatase 2A (PP2A) during mitosis. When phosphorylated at Ser-67 during mitosis, specifically interacts with ppp2r2d (PR55-delta) and inhibits its activity, leading to inactivation of PP2A, an essential condition to keep cyclin-B1-CDK1 activity high during M phase. This Danio rerio (Zebrafish) protein is Alpha-endosulfine (ensa).